Consider the following 456-residue polypeptide: Glycerol-3-phosphate acyltransferase 4 (456 aa).

The first 37 residues, Met-1–Gly-37, serve as a signal peptide directing secretion. A run of 2 helical transmembrane segments spans residues Ile-156–Leu-176 and Ile-180–Leu-200. The N-linked (GlcNAc...) asparagine glycan is linked to Asn-247. An HXXXXD motif motif is present at residues His-248–Asp-253. 3 N-linked (GlcNAc...) asparagine glycosylation sites follow: Asn-327, Asn-328, and Asn-362.

This sequence belongs to the 1-acyl-sn-glycerol-3-phosphate acyltransferase family.

Its subcellular location is the endoplasmic reticulum membrane. It carries out the reaction sn-glycerol 3-phosphate + an acyl-CoA = a 1-acyl-sn-glycero-3-phosphate + CoA. The catalysed reaction is dodecanoyl-CoA + sn-glycerol 3-phosphate = 1-dodecanoyl-sn-glycerol 3-phosphate + CoA. The enzyme catalyses sn-glycerol 3-phosphate + hexadecanoyl-CoA = 1-hexadecanoyl-sn-glycero-3-phosphate + CoA. It catalyses the reaction sn-glycerol 3-phosphate + octadecanoyl-CoA = 1-octadecanoyl-sn-glycero-3-phosphate + CoA. It carries out the reaction sn-glycerol 3-phosphate + (9Z)-octadecenoyl-CoA = 1-(9Z-octadecenoyl)-sn-glycero-3-phosphate + CoA. The catalysed reaction is (9Z,12Z)-octadecadienoyl-CoA + sn-glycerol 3-phosphate = 1-(9Z,12Z)-octadecadienoyl-sn-glycero-3-phosphate + CoA. Its pathway is phospholipid metabolism; CDP-diacylglycerol biosynthesis; CDP-diacylglycerol from sn-glycerol 3-phosphate: step 1/3. Converts glycerol-3-phosphate to 1-acyl-sn-glycerol-3-phosphate (lysophosphatidic acid or LPA) by incorporating an acyl moiety at the sn-1 position of the glycerol backbone. Active against both saturated and unsaturated long-chain fatty acyl-CoAs. Protects cells against lipotoxicity. The chain is Glycerol-3-phosphate acyltransferase 4 from Pongo abelii (Sumatran orangutan).